Consider the following 369-residue polypeptide: 4beta-methylsterol monooxygenase (369 aa).

A Rieske domain is found at 29-135 (WYVVEIDGRL…VKAQWGLIWL (107 aa)). [2Fe-2S] cluster is bound by residues cysteine 70, histidine 72, cysteine 89, and histidine 92.

It depends on [2Fe-2S] cluster as a cofactor.

The catalysed reaction is a 3beta-hydroxy-4,4-dimethylsteroid + 3 NADH + 3 O2 + 2 H(+) = a 3beta-hydroxy-4alpha-methylsteroid-4beta-carboxylate + 3 NAD(+) + 4 H2O. It carries out the reaction 4,4-dimethyl-5alpha-cholesta-8,24-dien-3beta-ol + 3 NADH + 3 O2 + 2 H(+) = 4beta-carboxy-4alpha-methyl-5alpha-cholesta-8,24-dien-3beta-ol + 3 NAD(+) + 4 H2O. The enzyme catalyses a 3beta-hydroxy-4,4-dimethylsteroid + NADH + O2 + H(+) = a 3beta-hydroxy-4beta-hydroxymethyl-4alpha-methylsteroid + NAD(+) + H2O. It catalyses the reaction a 3beta-hydroxy-4beta-hydroxymethyl-4alpha-methylsteroid + NADH + O2 + H(+) = a 3beta-hydroxy-4beta-formyl-4alpha-methylsteroid + NAD(+) + 2 H2O. The catalysed reaction is a 3beta-hydroxy-4beta-formyl-4alpha-methylsteroid + NADH + O2 = a 3beta-hydroxy-4alpha-methylsteroid-4beta-carboxylate + NAD(+) + H2O. It carries out the reaction 4,4-dimethyl-5alpha-cholesta-8,24-dien-3beta-ol + NADH + O2 + H(+) = 4beta-hydroxymethyl-4alpha-methylzymosterol + NAD(+) + H2O. The enzyme catalyses 4beta-hydroxymethyl-4alpha-methylzymosterol + NADH + O2 + H(+) = 4beta-formylmethyl-4alpha-methyl-5alpha-cholesta-8,24-dien-3beta-ol + NAD(+) + 2 H2O. It catalyses the reaction 4beta-formylmethyl-4alpha-methyl-5alpha-cholesta-8,24-dien-3beta-ol + NADH + O2 = 4beta-carboxy-4alpha-methyl-5alpha-cholesta-8,24-dien-3beta-ol + NAD(+) + H2O. It participates in steroid biosynthesis; sterol biosynthesis. Functionally, participates in the biosynthesis of bacterial sterols. Together with SdmB, removes one methyl group from the C-4 position of 4,4-dimethylated steroid molecules. SdmA oxidizes the sterol 4beta-methyl group into first a hydroxyl, then an aldehyde and finally a carboxylic acid group. This is 4beta-methylsterol monooxygenase from Methylococcus capsulatus (strain ATCC 33009 / NCIMB 11132 / Bath).